The chain runs to 339 residues: Ketol-acid reductoisomerase (NADP(+)) (339 aa).

The 182-residue stretch at 1 to 182 folds into the KARI N-terminal Rossmann domain; it reads MRVYYDRDAD…GGGRSGIIET (182 aa). NADP(+) is bound by residues 24-27, Lys48, Ser51, Thr53, and 83-86; these read YGSQ and DELQ. Residue His108 is part of the active site. An NADP(+)-binding site is contributed by Gly134. The KARI C-terminal knotted domain occupies 183–328; sequence NFREECETDL…AKLRGMMPWI (146 aa). Asp191, Glu195, Glu227, and Glu231 together coordinate Mg(2+). Ser252 provides a ligand contact to substrate.

It belongs to the ketol-acid reductoisomerase family. Mg(2+) is required as a cofactor.

It catalyses the reaction (2R)-2,3-dihydroxy-3-methylbutanoate + NADP(+) = (2S)-2-acetolactate + NADPH + H(+). The enzyme catalyses (2R,3R)-2,3-dihydroxy-3-methylpentanoate + NADP(+) = (S)-2-ethyl-2-hydroxy-3-oxobutanoate + NADPH + H(+). It participates in amino-acid biosynthesis; L-isoleucine biosynthesis; L-isoleucine from 2-oxobutanoate: step 2/4. The protein operates within amino-acid biosynthesis; L-valine biosynthesis; L-valine from pyruvate: step 2/4. Its function is as follows. Involved in the biosynthesis of branched-chain amino acids (BCAA). Catalyzes an alkyl-migration followed by a ketol-acid reduction of (S)-2-acetolactate (S2AL) to yield (R)-2,3-dihydroxy-isovalerate. In the isomerase reaction, S2AL is rearranged via a Mg-dependent methyl migration to produce 3-hydroxy-3-methyl-2-ketobutyrate (HMKB). In the reductase reaction, this 2-ketoacid undergoes a metal-dependent reduction by NADPH to yield (R)-2,3-dihydroxy-isovalerate. This chain is Ketol-acid reductoisomerase (NADP(+)), found in Rhizobium johnstonii (strain DSM 114642 / LMG 32736 / 3841) (Rhizobium leguminosarum bv. viciae).